Consider the following 234-residue polypeptide: Orotidine 5'-phosphate decarboxylase (234 aa).

Substrate is bound by residues Asp14, Lys36, 63 to 72 (DLKFHDIPNT), Thr123, Arg184, Gln193, Gly213, and Arg214. Catalysis depends on Lys65, which acts as the Proton donor.

This sequence belongs to the OMP decarboxylase family. Type 1 subfamily. Homodimer.

It carries out the reaction orotidine 5'-phosphate + H(+) = UMP + CO2. It functions in the pathway pyrimidine metabolism; UMP biosynthesis via de novo pathway; UMP from orotate: step 2/2. In terms of biological role, catalyzes the decarboxylation of orotidine 5'-monophosphate (OMP) to uridine 5'-monophosphate (UMP). This Pseudoalteromonas translucida (strain TAC 125) protein is Orotidine 5'-phosphate decarboxylase.